Reading from the N-terminus, the 188-residue chain is Elongation factor P (188 aa).

Belongs to the elongation factor P family.

It is found in the cytoplasm. It functions in the pathway protein biosynthesis; polypeptide chain elongation. In terms of biological role, involved in peptide bond synthesis. Stimulates efficient translation and peptide-bond synthesis on native or reconstituted 70S ribosomes in vitro. Probably functions indirectly by altering the affinity of the ribosome for aminoacyl-tRNA, thus increasing their reactivity as acceptors for peptidyl transferase. This Bacteroides fragilis (strain ATCC 25285 / DSM 2151 / CCUG 4856 / JCM 11019 / LMG 10263 / NCTC 9343 / Onslow / VPI 2553 / EN-2) protein is Elongation factor P.